Here is a 248-residue protein sequence, read N- to C-terminus: Ribosomal RNA small subunit methyltransferase J (248 aa).

S-adenosyl-L-methionine-binding positions include 101 to 102 (RD), 117 to 118 (ER), 153 to 154 (SS), and Asp171.

The protein belongs to the methyltransferase superfamily. RsmJ family.

Its subcellular location is the cytoplasm. It catalyses the reaction guanosine(1516) in 16S rRNA + S-adenosyl-L-methionine = N(2)-methylguanosine(1516) in 16S rRNA + S-adenosyl-L-homocysteine + H(+). In terms of biological role, specifically methylates the guanosine in position 1516 of 16S rRNA. This is Ribosomal RNA small subunit methyltransferase J from Serratia proteamaculans (strain 568).